The following is a 309-amino-acid chain: Ribonuclease Z (309 aa).

Zn(2+)-binding residues include H63, H65, D67, H68, H145, D216, and H274. D67 functions as the Proton acceptor in the catalytic mechanism.

It belongs to the RNase Z family. As to quaternary structure, homodimer. It depends on Zn(2+) as a cofactor.

It catalyses the reaction Endonucleolytic cleavage of RNA, removing extra 3' nucleotides from tRNA precursor, generating 3' termini of tRNAs. A 3'-hydroxy group is left at the tRNA terminus and a 5'-phosphoryl group is left at the trailer molecule.. Functionally, zinc phosphodiesterase, which displays some tRNA 3'-processing endonuclease activity. Probably involved in tRNA maturation, by removing a 3'-trailer from precursor tRNA. This Streptococcus equi subsp. equi (strain 4047) protein is Ribonuclease Z.